The sequence spans 153 residues: Large ribosomal subunit protein bL9 (153 aa).

This sequence belongs to the bacterial ribosomal protein bL9 family.

Binds to the 23S rRNA. The sequence is that of Large ribosomal subunit protein bL9 from Koribacter versatilis (strain Ellin345).